Consider the following 502-residue polypeptide: ATP synthase subunit alpha (502 aa).

169–176 (GDRQTGKT) contributes to the ATP binding site.

This sequence belongs to the ATPase alpha/beta chains family. In terms of assembly, F-type ATPases have 2 components, CF(1) - the catalytic core - and CF(0) - the membrane proton channel. CF(1) has five subunits: alpha(3), beta(3), gamma(1), delta(1), epsilon(1). CF(0) has three main subunits: a(1), b(2) and c(9-12). The alpha and beta chains form an alternating ring which encloses part of the gamma chain. CF(1) is attached to CF(0) by a central stalk formed by the gamma and epsilon chains, while a peripheral stalk is formed by the delta and b chains.

It is found in the cell inner membrane. It carries out the reaction ATP + H2O + 4 H(+)(in) = ADP + phosphate + 5 H(+)(out). Produces ATP from ADP in the presence of a proton gradient across the membrane. The alpha chain is a regulatory subunit. This is ATP synthase subunit alpha from Oleidesulfovibrio alaskensis (strain ATCC BAA-1058 / DSM 17464 / G20) (Desulfovibrio alaskensis).